A 69-amino-acid polypeptide reads, in one-letter code: UPF0337 protein RB0906 (69 aa).

Belongs to the UPF0337 (CsbD) family.

In Rhizobium meliloti (strain 1021) (Ensifer meliloti), this protein is UPF0337 protein RB0906.